The chain runs to 255 residues: tRNA (guanine-N(1)-)-methyltransferase (255 aa).

Residues Gly-113 and 133-138 (VGDFVL) contribute to the S-adenosyl-L-methionine site.

This sequence belongs to the RNA methyltransferase TrmD family. In terms of assembly, homodimer.

It localises to the cytoplasm. The catalysed reaction is guanosine(37) in tRNA + S-adenosyl-L-methionine = N(1)-methylguanosine(37) in tRNA + S-adenosyl-L-homocysteine + H(+). Functionally, specifically methylates guanosine-37 in various tRNAs. The polypeptide is tRNA (guanine-N(1)-)-methyltransferase (Francisella philomiragia subsp. philomiragia (strain ATCC 25017 / CCUG 19701 / FSC 153 / O#319-036)).